The sequence spans 149 residues: Deoxyuridine 5'-triphosphate nucleotidohydrolase (149 aa).

Substrate is bound by residues 68 to 70 (RSG), N81, 85 to 87 (TVD), and K95.

Belongs to the dUTPase family. Mg(2+) is required as a cofactor.

It carries out the reaction dUTP + H2O = dUMP + diphosphate + H(+). It functions in the pathway pyrimidine metabolism; dUMP biosynthesis; dUMP from dCTP (dUTP route): step 2/2. In terms of biological role, this enzyme is involved in nucleotide metabolism: it produces dUMP, the immediate precursor of thymidine nucleotides and it decreases the intracellular concentration of dUTP so that uracil cannot be incorporated into DNA. The chain is Deoxyuridine 5'-triphosphate nucleotidohydrolase from Wolinella succinogenes (strain ATCC 29543 / DSM 1740 / CCUG 13145 / JCM 31913 / LMG 7466 / NCTC 11488 / FDC 602W) (Vibrio succinogenes).